Here is a 26-residue protein sequence, read N- to C-terminus: GTP-binding protein Rheb (26 aa).

5 residues coordinate GTP: serine 1, serine 2, valine 13, tyrosine 16, and threonine 19. Serine 1 is a Mg(2+) binding site. The short motif at 16–24 is the Effector region element; it reads YDPTIENTF. A Mg(2+)-binding site is contributed by threonine 19.

This sequence belongs to the small GTPase superfamily. Rheb family.

The catalysed reaction is GTP + H2O = GDP + phosphate + H(+). In terms of biological role, binds GTP and exhibits intrinsic GTPase activity. This chain is GTP-binding protein Rheb, found in Crocodylus siamensis (Siamese crocodile).